The chain runs to 102 residues: Small ribosomal subunit protein uS10 (102 aa).

The segment at 30 to 58 (TGVNLSGPIPLPTKTLEIPTRKSPDGEGT) is disordered.

This sequence belongs to the universal ribosomal protein uS10 family. As to quaternary structure, part of the 30S ribosomal subunit.

Functionally, involved in the binding of tRNA to the ribosomes. This Haloquadratum walsbyi (strain DSM 16790 / HBSQ001) protein is Small ribosomal subunit protein uS10.